The following is a 198-amino-acid chain: Small ribosomal subunit protein eS1 (198 aa).

Belongs to the eukaryotic ribosomal protein eS1 family.

This Methanosphaerula palustris (strain ATCC BAA-1556 / DSM 19958 / E1-9c) protein is Small ribosomal subunit protein eS1.